The sequence spans 174 residues: Thiol-disulfide oxidoreductase ResA (174 aa).

Residues 11 to 30 traverse the membrane as a helical; Signal-anchor for type II membrane protein segment; the sequence is TVILLLLLAALGYTIYANFF. In terms of domain architecture, Thioredoxin spans 36–174; sequence VAVGSTAPDF…IKQHLESIKP (139 aa). A disulfide bridge links Cys-74 with Cys-77.

The protein belongs to the thioredoxin family. ResA subfamily.

The protein resides in the cell membrane. It participates in protein modification; cytochrome c assembly. Thiol-disulfide oxidoreductase which is required in disulfide reduction during c-type cytochrome synthesis. May accept reducing equivalents from CcdA, leading to breakage of disulfide bonds in apocytochrome c; following this reduction heme can be covalently attached. The chain is Thiol-disulfide oxidoreductase ResA from Geobacillus thermodenitrificans (strain NG80-2).